Consider the following 144-residue polypeptide: Putative RNase YutE (144 aa).

Residue Arg-96 is part of the active site. Residues 96 to 103 (RKTLVQQY) carry the RX(4)HXY motif motif.

Belongs to the HepT RNase toxin family. In terms of assembly, homodimer, probably forms a complex with cognate antitoxin YutD.

Probable toxic component of a putative type VII toxin-antitoxin (TA) system, probably an RNase. Probably neutralized by cognate antitoxin YutD. In Bacillus subtilis (strain 168), this protein is Putative RNase YutE (yutE).